The sequence spans 178 residues: Large ribosomal subunit protein uL6 (178 aa).

The protein belongs to the universal ribosomal protein uL6 family. As to quaternary structure, part of the 50S ribosomal subunit. Interacts weakly with protein L13.

In terms of biological role, this protein binds to the 23S rRNA, and is important in its secondary structure. It is located near the subunit interface in the base of the L7/L12 stalk, and near the tRNA binding site of the peptidyltransferase center. In Haloarcula marismortui (strain ATCC 43049 / DSM 3752 / JCM 8966 / VKM B-1809) (Halobacterium marismortui), this protein is Large ribosomal subunit protein uL6.